The chain runs to 72 residues: Large ribosomal subunit protein uL29 (72 aa).

The protein belongs to the universal ribosomal protein uL29 family.

This chain is Large ribosomal subunit protein uL29, found in Thermodesulfovibrio yellowstonii (strain ATCC 51303 / DSM 11347 / YP87).